Here is a 1323-residue protein sequence, read N- to C-terminus: Traf2 and NCK-interacting protein kinase (1323 aa).

The Protein kinase domain occupies 25 to 289; sequence FELVELVGNG…TEQLMKHPFI (265 aa). ATP is bound by residues 31-39 and Lys-54; that span reads VGNGTYGQV. Asp-153 (proton acceptor) is an active-site residue. Thr-187 carries the post-translational modification Phosphothreonine. Disordered stretches follow at residues 284-347, 397-559, and 571-838; these read MKHP…LPGE, EQKE…LRPV, and SQGP…NEQY. Positions 288–307 are enriched in basic and acidic residues; the sequence is FIRDQPNERQVRIQLKDHID. The segment at 290 to 1010 is mediates interaction with NEDD4; sequence RDQPNERQVR…EIRKYKKRFN (721 aa). Residues 317–335 show a composition bias toward acidic residues; the sequence is DETEYEYSGSEEEEEENDS. 2 positions are modified to phosphoserine: Ser-324 and Ser-326. 3 stretches are compositionally biased toward basic and acidic residues: residues 397-470, 477-494, and 503-513; these read EQKE…ERDY, QRQEQRPLEKKPLYHYKE, and AWAKEVEERSR. Phosphoserine is present on residues Ser-531 and Ser-541. Phosphothreonine is present on Thr-552. Phosphoserine occurs at positions 571, 579, 581, and 611. Over residues 623–640 the composition is skewed to basic and acidic residues; sequence RIEKFDRSSWLRQEEDIP. 9 positions are modified to phosphoserine: Ser-649, Ser-651, Ser-659, Ser-672, Ser-678, Ser-691, Ser-735, Ser-737, and Ser-740. Low complexity predominate over residues 691–726; sequence SSLQRTSSGSSSSSSTPSSQPSSQGGSQPGSQAGSS. Composition is skewed to basic and acidic residues over residues 746-760 and 772-790; these read EPSKVKPEESRDITR and KELRELRIEETNRPLKKVT. Positions 797–810 are enriched in acidic residues; the sequence is EESESSEEEEEDGE. Phosphoserine is present on Ser-922. The tract at residues 939–960 is disordered; it reads FVDPRVYQTSPTDEDEEDDESS. Residues 950–959 are compositionally biased toward acidic residues; that stretch reads TDEDEEDDES. The CNH domain occupies 1010–1297; that stretch reads NSEILCAALW…KFLCERNDKV (288 aa).

The protein belongs to the protein kinase superfamily. STE Ser/Thr protein kinase family. STE20 subfamily. Interacts (via the CNH domain) with RAP2A (GTP-bound form preferentially); the interaction is direct and required for the activation of TNIK by RAP2A. Interacts with NEDD4; recruits RAP2A to NEDD4. Interacts with TRAF2 and NCK. Interacts with TCF7L2/TCF4 and CTNNB1; the interaction is direct. Interacts with TANC1. In terms of processing, autophosphorylated. Autophosphorylation is activated by RAP2A and induces association to the cytoskeletal fraction.

It localises to the nucleus. The protein localises to the cytoplasm. Its subcellular location is the recycling endosome. The protein resides in the cytoskeleton. The catalysed reaction is L-seryl-[protein] + ATP = O-phospho-L-seryl-[protein] + ADP + H(+). It catalyses the reaction L-threonyl-[protein] + ATP = O-phospho-L-threonyl-[protein] + ADP + H(+). Functionally, serine/threonine kinase that acts as an essential activator of the Wnt signaling pathway. Recruited to promoters of Wnt target genes and required to activate their expression. May act by phosphorylating TCF4/TCF7L2. Appears to act upstream of the JUN N-terminal pathway. May play a role in the response to environmental stress. Part of a signaling complex composed of NEDD4, RAP2A and TNIK which regulates neuronal dendrite extension and arborization during development. More generally, it may play a role in cytoskeletal rearrangements and regulate cell spreading. Phosphorylates SMAD1 on Thr-322. Activator of the Hippo signaling pathway which plays a pivotal role in organ size control and tumor suppression by restricting proliferation and promoting apoptosis. MAP4Ks act in parallel to and are partially redundant with STK3/MST2 and STK4/MST2 in the phosphorylation and activation of LATS1/2, and establish MAP4Ks as components of the expanded Hippo pathway. In Mus musculus (Mouse), this protein is Traf2 and NCK-interacting protein kinase (Tnik).